Consider the following 286-residue polypeptide: Putative type II secretion system L-type protein YghE (286 aa).

Residues 136-156 (VMILPILLILVALAVERGVTL) form a helical membrane-spanning segment.

It belongs to the GSP L family.

It localises to the cell inner membrane. Functionally, involved in a type II secretion system (T2SS, formerly general secretion pathway, GSP) for the export of folded proteins across the outer membrane. In Escherichia coli (strain K12), this protein is Putative type II secretion system L-type protein YghE.